Consider the following 458-residue polypeptide: UPF0210 protein Maeo_1412 (458 aa).

This sequence belongs to the UPF0210 family.

The sequence is that of UPF0210 protein Maeo_1412 from Methanococcus aeolicus (strain ATCC BAA-1280 / DSM 17508 / OCM 812 / Nankai-3).